The primary structure comprises 1113 residues: Translation initiation factor IF-2 (1113 aa).

4 stretches are compositionally biased toward polar residues: residues 56 to 72 (QSNQSINNKTKQNSSKE), 129 to 139 (KANTSNQSKGV), 162 to 187 (LENNASKQNIEDNNNFQERSPRTQLV), and 194 to 205 (TKNNEPPQQKTS). 2 disordered regions span residues 56–446 (QSNQ…IGEN) and 470–504 (LARPAKPKSTKKSNSKATVVTRKRKKESTRQRQRR). Residues 248 to 265 (PVQPRTQNNQNRQRIPNK) are compositionally biased toward low complexity. Basic and acidic residues predominate over residues 415–429 (RRSDWDDAAKLEALR). 2 stretches are compositionally biased toward basic residues: residues 474–483 (AKPKSTKKSN) and 490–504 (TRKRKKESTRQRQRR). The region spanning 605–777 (RRPPVVTVMG…VLLVTEVEDL (173 aa)) is the tr-type G domain. A G1 region spans residues 614 to 621 (GHVDHGKT). 614–621 (GHVDHGKT) is a GTP binding site. The G2 stretch occupies residues 639-643 (GITQH). The G3 stretch occupies residues 664–667 (DTPG). Residues 664-668 (DTPGH) and 718-721 (NKID) contribute to the GTP site. The segment at 718–721 (NKID) is G4. The segment at 754–756 (SAI) is G5.

The protein belongs to the TRAFAC class translation factor GTPase superfamily. Classic translation factor GTPase family. IF-2 subfamily.

It is found in the cytoplasm. One of the essential components for the initiation of protein synthesis. Protects formylmethionyl-tRNA from spontaneous hydrolysis and promotes its binding to the 30S ribosomal subunits. Also involved in the hydrolysis of GTP during the formation of the 70S ribosomal complex. The polypeptide is Translation initiation factor IF-2 (Prochlorococcus marinus (strain MIT 9211)).